Consider the following 352-residue polypeptide: Proton-activated chloride channel (352 aa).

Residues 1–55 are disordered; it reads MEAIRKELSRSYQELNEEAEPVAIDPEEAEDEEKEQEEAASAVAPDRDSDRSSPP. Topologically, residues 1–65 are cytoplasmic; the sequence is MEAIRKELSR…VRFSRTCLKN (65 aa). Acidic residues predominate over residues 15-38; the sequence is LNEEAEPVAIDPEEAEDEEKEQEE. A helical membrane pass occupies residues 66–86; that stretch reads FFSVLLILVYLLLMGVAVFLV. Over 87–299 the chain is Extracellular; sequence YQTITDFRDK…KDPYIQEIQD (213 aa). A helical membrane pass occupies residues 300 to 320; it reads IITANPWSMIALLCSVFLVLF. Over 321 to 352 the chain is Cytoplasmic; it reads KAADFAKLSVKWMIKVRRRHLKKRARELNHIS.

This sequence belongs to the proton-activated chloride channel family.

Its subcellular location is the cell membrane. It catalyses the reaction chloride(in) = chloride(out). Its function is as follows. Chloride channel gated by pH that facilitates the entry of chloride ions into cells upon exposure to extracellular acidic pH. The protein is Proton-activated chloride channel of Xenopus tropicalis (Western clawed frog).